We begin with the raw amino-acid sequence, 366 residues long: MDFLNSSDQNLTSEELLNRMPSKILVSLTLSGLALMTTTINCLVITAIIVTRKLHHPANYLICSLAVTDFLVAVLVMPFSIVYIVRESWIMGQGLCDLWLSVDIICCTCSILHLSAIALDRYRAITDAVEYARKRTPRHAGITITTVWVISVFISVPPLFWRHQGNSRDDQCIIKHDHIVSTIYSTFGAFYIPLVLILILYYKIYRAARTLYHKRQASRMIKEELNGQVLLESGEKSIKLVSTSYMLEKSLSDPSTDFDRIHSTVKSPRSELKHEKSWRRQKISGTRERKAATTLGLILGAFVICWLPFFVKELVVNICEKCKISEEMSNFLAWLGYLNSLINPLIYTIFNEDFKKAFQKLVRCRN.

At M1 to I24 the chain is on the extracellular side. Residues N5 and N10 are each glycosylated (N-linked (GlcNAc...) asparagine). Residues L25–I49 traverse the membrane as a helical segment. The Cytoplasmic segment spans residues V50–N59. A helical membrane pass occupies residues Y60 to I81. Topologically, residues V82–C96 are extracellular. C96 and C172 are oxidised to a cystine. Residues D97–L119 traverse the membrane as a helical segment. D103 and C107 together coordinate serotonin. The DRY motif; important for ligand-induced conformation changes motif lies at D120–Y122. Over D120–H139 the chain is Cytoplasmic. Residues A140 to L159 traverse the membrane as a helical segment. Residues F160 to H178 are Extracellular-facing. A helical membrane pass occupies residues I179–Y202. The Cytoplasmic segment spans residues K203–A291. A helical transmembrane segment spans residues A292–V315. Residues V316–E327 are Extracellular-facing. Residues M328 to F350 traverse the membrane as a helical segment. An NPxxY motif; important for ligand-induced conformation changes and signaling motif is present at residues N343 to Y347. Residues N351–N366 are Cytoplasmic-facing.

The protein belongs to the G-protein coupled receptor 1 family.

Its subcellular location is the cell membrane. Functionally, G-protein coupled receptor for 5-hydroxytryptamine (serotonin). Also functions as a receptor for various alkaloids and psychoactive substances. Ligand binding causes a conformation change that triggers signaling via guanine nucleotide-binding proteins (G proteins) and modulates the activity of downstream effectors, such as adenylate cyclase. HTR1F is coupled to G(i)/G(o) G alpha proteins and mediates inhibitory neurotransmission by inhibiting adenylate cyclase activity. In Rattus norvegicus (Rat), this protein is 5-hydroxytryptamine receptor 1F (Htr1f).